Reading from the N-terminus, the 145-residue chain is UPF0201 protein SSO1042 (145 aa).

It belongs to the UPF0201 family.

This is UPF0201 protein SSO1042 from Saccharolobus solfataricus (strain ATCC 35092 / DSM 1617 / JCM 11322 / P2) (Sulfolobus solfataricus).